We begin with the raw amino-acid sequence, 134 residues long: Thionin-2.2 (134 aa).

The first 24 residues, 1 to 24, serve as a signal peptide directing secretion; sequence MEGKTVISSLLIMSLVLAQIQVEA. 3 disulfides stabilise this stretch: Cys27–Cys64, Cys28–Cys56, and Cys40–Cys50. Residues 71-134 constitute a propeptide, acidic domain; that stretch reads DILENSGDAV…GGSTAAVKSA (64 aa).

The protein belongs to the plant thionin (TC 1.C.44) family. As to expression, low basal expression in seedlings. Also detected in rosette leaves.

The protein localises to the secreted. Functionally, thionins are small plant proteins which are toxic to animal cells. They seem to exert their toxic effect at the level of the cell membrane. Their precise function is not known. This Arabidopsis thaliana (Mouse-ear cress) protein is Thionin-2.2 (THI2.2).